The chain runs to 293 residues: 4-hydroxy-tetrahydrodipicolinate synthase (293 aa).

Threonine 47 provides a ligand contact to pyruvate. The active-site Proton donor/acceptor is the tyrosine 136. Catalysis depends on lysine 164, which acts as the Schiff-base intermediate with substrate. Isoleucine 206 contacts pyruvate.

The protein belongs to the DapA family. As to quaternary structure, homotetramer; dimer of dimers.

It is found in the cytoplasm. The catalysed reaction is L-aspartate 4-semialdehyde + pyruvate = (2S,4S)-4-hydroxy-2,3,4,5-tetrahydrodipicolinate + H2O + H(+). It functions in the pathway amino-acid biosynthesis; L-lysine biosynthesis via DAP pathway; (S)-tetrahydrodipicolinate from L-aspartate: step 3/4. In terms of biological role, catalyzes the condensation of (S)-aspartate-beta-semialdehyde [(S)-ASA] and pyruvate to 4-hydroxy-tetrahydrodipicolinate (HTPA). In Listeria monocytogenes serovar 1/2a (strain ATCC BAA-679 / EGD-e), this protein is 4-hydroxy-tetrahydrodipicolinate synthase.